Consider the following 524-residue polypeptide: Glucose-6-phosphate 1-dehydrogenase (524 aa).

Ser20 is modified (phosphoserine). NADP(+) contacts are provided by residues 42-49 (GASGDLAK), Arg76, and Lys175. D-glucose 6-phosphate contacts are provided by residues Lys175, 205–209 (HYLGK), Glu243, and Asp262. His267 serves as the catalytic Proton acceptor. Position 362 (Arg362) interacts with NADP(+). 2 residues coordinate D-glucose 6-phosphate: Lys365 and Arg370. Positions 371, 375, and 398 each coordinate NADP(+). Gln400 serves as a coordination point for D-glucose 6-phosphate. NADP(+) is bound by residues 406–408 (YFK), 426–428 (DLT), Arg492, Tyr508, and Trp514.

It belongs to the glucose-6-phosphate dehydrogenase family.

It localises to the cytoplasm. The protein resides in the cytosol. The catalysed reaction is D-glucose 6-phosphate + NADP(+) = 6-phospho-D-glucono-1,5-lactone + NADPH + H(+). The protein operates within carbohydrate degradation; pentose phosphate pathway; D-ribulose 5-phosphate from D-glucose 6-phosphate (oxidative stage): step 1/3. Functionally, cytosolic glucose-6-phosphate dehydrogenase that catalyzes the first and rate-limiting step of the oxidative branch within the pentose phosphate pathway/shunt, an alternative route to glycolysis for the dissimilation of carbohydrates and a major source of reducing power and metabolic intermediates for fatty acid and nucleic acid biosynthetic processes. In Drosophila melanogaster (Fruit fly), this protein is Glucose-6-phosphate 1-dehydrogenase.